A 352-amino-acid chain; its full sequence is MLELNFSQTLGTHCLTLNETLPASGITAIFGVSGAGKTSLINAISGLTRPQKGRIALNGRVLHDAENGICLTPEKRRIGYVFQDARLFPHYKVRGNLRYGMAKSMTGQFDKLVSLLGIEALLDRLPGSLSGGEKQRVAIGRALLTAPELLLLDEPLASLDIPRKRELLPYLQRLAREINIPMLYVSHSLDEILHLADKVMVLEDGQVKAFGPLEEVWGSSVMHPWLPKEQQSSILKVSVLEHHPHYAMTALALGDQHLWVNKLNQPLQSTLRIRIQASDVSLVLQPPQQTSIRNVLRAKVANCYDDNGQVEVQLEIGGRTLWARISPWARDELNIKPGLWLYAQVKSVSITA.

The ABC transporter domain maps to 1-229; it reads MLELNFSQTL…SVMHPWLPKE (229 aa). 31 to 38 is a binding site for ATP; it reads GVSGAGKT. The Mop domain maps to 289-352; sequence QTSIRNVLRA…AQVKSVSITA (64 aa).

The protein belongs to the ABC transporter superfamily. Molybdate importer (TC 3.A.1.8) family. As to quaternary structure, the complex is composed of two ATP-binding proteins (ModC), two transmembrane proteins (ModB) and a solute-binding protein (ModA).

The protein localises to the cell inner membrane. It catalyses the reaction molybdate(out) + ATP + H2O = molybdate(in) + ADP + phosphate + H(+). Its function is as follows. Part of the ABC transporter complex ModABC involved in molybdenum import. Responsible for energy coupling to the transport system. This chain is Molybdenum import ATP-binding protein ModC, found in Salmonella paratyphi A (strain ATCC 9150 / SARB42).